The following is a 138-amino-acid chain: ATP synthase epsilon chain (138 aa).

This sequence belongs to the ATPase epsilon chain family. In terms of assembly, F-type ATPases have 2 components, CF(1) - the catalytic core - and CF(0) - the membrane proton channel. CF(1) has five subunits: alpha(3), beta(3), gamma(1), delta(1), epsilon(1). CF(0) has three main subunits: a, b and c.

The protein localises to the cell membrane. Functionally, produces ATP from ADP in the presence of a proton gradient across the membrane. The protein is ATP synthase epsilon chain (atpC) of Streptococcus mutans serotype c (strain ATCC 700610 / UA159).